Consider the following 418-residue polypeptide: Perilipin-1 homolog (418 aa).

The required for lipid droplet localization stretch occupies residues leucine 211–serine 275.

Belongs to the perilipin family. In terms of tissue distribution, expressed in intestinal and epidermal cells. Expressed in the muscle and hypodermis.

Its subcellular location is the lipid droplet. Its function is as follows. Lipid droplet-associated protein which plays a role in lipid droplet clustering. The sequence is that of Perilipin-1 homolog from Caenorhabditis elegans.